The chain runs to 230 residues: Large ribosomal subunit protein uL1 (230 aa).

It belongs to the universal ribosomal protein uL1 family. In terms of assembly, part of the 50S ribosomal subunit.

Functionally, binds directly to 23S rRNA. The L1 stalk is quite mobile in the ribosome, and is involved in E site tRNA release. In terms of biological role, protein L1 is also a translational repressor protein, it controls the translation of the L11 operon by binding to its mRNA. The chain is Large ribosomal subunit protein uL1 from Onion yellows phytoplasma (strain OY-M).